The following is a 257-amino-acid chain: AN1-type zinc finger protein 2B (257 aa).

2 AN1-type zinc fingers span residues 4 to 52 (PDLG…QKDI) and 94 to 142 (KIFT…HPTS). Residues cysteine 10, cysteine 15, cysteine 25, cysteine 28, cysteine 33, histidine 36, histidine 42, cysteine 44, cysteine 100, cysteine 105, cysteine 115, cysteine 118, cysteine 123, histidine 126, histidine 132, and cysteine 134 each coordinate Zn(2+). The VCP/p97-interacting motif (VIM) stretch occupies residues 141-151 (TSRAGLAAISR). Residues 153–187 (QGLASTSTVPSPSRTLPSSSSPSRATPQLPPRTTS) are disordered. Over residues 156–179 (ASTSTVPSPSRTLPSSSSPSRATP) the composition is skewed to low complexity. Serine 163, serine 173, and serine 187 each carry phosphoserine. 2 UIM domains span residues 197 to 216 (SEDEALQRALELSLAEAKPQ) and 221 to 240 (QEEEDLALAQALSASEAEYQ). A Cysteine methyl ester modification is found at cysteine 254. The S-geranylgeranyl cysteine moiety is linked to residue cysteine 254. A CAAX motif motif is present at residues 254-257 (CSLC). The propeptide at 255–257 (SLC) is removed in mature form.

As to quaternary structure, binds 'Lys-48'-linked polyubiquitin chains of ubiquitinated proteins. Associates with the proteasome complex; upon exposure to arsenite. Interacts (via VIM motif) with VCP; the interaction is direct. Interacts with BAG6. Interacts with IGF1R (nascent precursor form). Interacts with DERL1, FAF2, NPLOC4 and UFD1; probably through VCP. Post-translationally, phosphorylated by MAPK14. Phosphorylation has no effect on association with the proteasome complex.

Its subcellular location is the endoplasmic reticulum membrane. Functionally, plays a role in protein homeostasis by regulating both the translocation and the ubiquitin-mediated proteasomal degradation of nascent proteins at the endoplasmic reticulum. It is involved in the regulation of signal-mediated translocation of proteins into the endoplasmic reticulum. It also plays a role in the ubiquitin-mediated proteasomal degradation of proteins for which signal-mediated translocation to the endoplasmic reticulum has failed. May therefore function in the endoplasmic reticulum stress-induced pre-emptive quality control, a mechanism that selectively attenuates the translocation of newly synthesized proteins into the endoplasmic reticulum and reroutes them to the cytosol for proteasomal degradation. By controlling the steady-state expression of the IGF1R receptor, indirectly regulates the insulin-like growth factor receptor signaling pathway. The sequence is that of AN1-type zinc finger protein 2B from Rattus norvegicus (Rat).